The following is a 400-amino-acid chain: Subtilisin-like protease CPC735_013700 (400 aa).

Residues 1–19 (MGFVKILSLSLAATAVADA) form the signal peptide. Residues 20 to 116 (ATILSPRYPN…IEPNQIVTIS (97 aa)) constitute a propeptide that is removed on maturation. Residues 36 to 115 (YIVVMKDGVS…FIEPNQIVTI (80 aa)) form the Inhibitor I9 domain. Residues 126 to 400 (SWGLPRISVK…RKLLYNNSGK (275 aa)) enclose the Peptidase S8 domain. Residues aspartate 161 and histidine 192 each act as charge relay system in the active site. N-linked (GlcNAc...) asparagine glycosylation is present at asparagine 252. The active-site Charge relay system is serine 346. The N-linked (GlcNAc...) asparagine glycan is linked to asparagine 396.

Belongs to the peptidase S8 family.

Its subcellular location is the secreted. Functionally, secreted subtilisin-like serine protease with keratinolytic activity that contributes to pathogenicity. This Coccidioides posadasii (strain C735) (Valley fever fungus) protein is Subtilisin-like protease CPC735_013700.